Consider the following 252-residue polypeptide: MKLLKTVPAIVMLAGGMFASLNAAADDSVFTVMDDPASAKKPFEGNLNAGYLAQSGNTKSSSLTADTTMTWYGHTTAWSLWGNASNTSSNDERSSEKYAAGGRSRFNLTDYDYLFGQASWLTDRYNGYRERDVLTAGYGRQFLNGPVHSFRFEFGPGVRYDKYTDNASETQPLGYASGAYAWQLTDNAKFTQGVSVFGAEDTTLNSESALNVAINEHFGLKVAYNVTWNSEPPESAPEHTDRRTTLSLGYSM.

Residues 1–23 form the signal peptide; that stretch reads MKLLKTVPAIVMLAGGMFASLNA. The tract at residues 231–252 is disordered; that stretch reads EPPESAPEHTDRRTTLSLGYSM.

This is an uncharacterized protein from Escherichia coli (strain K12).